Consider the following 220-residue polypeptide: GTP cyclohydrolase 1 (220 aa).

Residues C109, H112, and C180 each coordinate Zn(2+).

This sequence belongs to the GTP cyclohydrolase I family. Toroid-shaped homodecamer, composed of two pentamers of five dimers.

It carries out the reaction GTP + H2O = 7,8-dihydroneopterin 3'-triphosphate + formate + H(+). Its pathway is cofactor biosynthesis; 7,8-dihydroneopterin triphosphate biosynthesis; 7,8-dihydroneopterin triphosphate from GTP: step 1/1. The polypeptide is GTP cyclohydrolase 1 (Yersinia pseudotuberculosis serotype O:1b (strain IP 31758)).